Here is a 99-residue protein sequence, read N- to C-terminus: Integration host factor subunit alpha (99 aa).

The tract at residues 49 to 75 (FGNFDLRDKNQRPGRNPKTGEDIPITA) is disordered.

It belongs to the bacterial histone-like protein family. As to quaternary structure, heterodimer of an alpha and a beta chain.

Its function is as follows. This protein is one of the two subunits of integration host factor, a specific DNA-binding protein that functions in genetic recombination as well as in transcriptional and translational control. The chain is Integration host factor subunit alpha from Salmonella arizonae (strain ATCC BAA-731 / CDC346-86 / RSK2980).